The following is a 306-amino-acid chain: Elongation factor Ts (306 aa).

The interval 80–83 (TDFV) is involved in Mg(2+) ion dislocation from EF-Tu.

This sequence belongs to the EF-Ts family.

The protein resides in the cytoplasm. Its function is as follows. Associates with the EF-Tu.GDP complex and induces the exchange of GDP to GTP. It remains bound to the aminoacyl-tRNA.EF-Tu.GTP complex up to the GTP hydrolysis stage on the ribosome. This is Elongation factor Ts from Clostridium acetobutylicum (strain ATCC 824 / DSM 792 / JCM 1419 / IAM 19013 / LMG 5710 / NBRC 13948 / NRRL B-527 / VKM B-1787 / 2291 / W).